The chain runs to 431 residues: UPF0597 protein BVU_2091 (431 aa).

The protein belongs to the UPF0597 family.

The protein is UPF0597 protein BVU_2091 of Phocaeicola vulgatus (strain ATCC 8482 / DSM 1447 / JCM 5826 / CCUG 4940 / NBRC 14291 / NCTC 11154) (Bacteroides vulgatus).